The sequence spans 923 residues: MAGVDSGKLIGSEIHGFHTLQDLDIQTMLDEAYSRWLRPNEIHALLCNHKFFTINVKPVNLPKSGTIVLFDRKMLRNFRKDGHNWKKKKDGKTIKEAHEHLKVGNEERIHVYYAHGEDTPTFVRRCYWLLDKSQEHIVLVHYRETHEVHAAPATPGNSYSSSITDHLSPKIVAEDTSSGVHNTCNTGFEVRSNSLGSRNHEIRLHEINTLDWDELLVPADISNQSHPTEEDMLYFTEQLQTAPRGSVKQGNHLAGYNGSVDIPSFPGLEDPVYQNNNSCGAGEFSSQHSHCGVDPNLQRRDFSATVTDQPGDALLNNGYGSQDSFGRWVNNFISDSPGSVDDPSLEAVYTPGQDSSTPPTVFHSHSDIPEQVFNITDVSPAWAYSTEKTKILVTGFFHDSFQHLGRSNLICICGELRVPAEFLQMGVYRCFLPPQSPGVVNLYLSVDGNKPISQLFSFEHRSVQFIEKAIPQDDQLYKWEEFEFQVRLAHLLFTSSNKISVLTSKISPENLLEAKKLASRTSHLLNSWAYLMKSIQANEVPFDQARDHLFELTLKNRLKEWLLEKVIENRNTKEYDSKGLGVIHLCAVLGYTWSILLFSWANISLDFRDKQGWTALHWAAYYGREKMVAALLSAGARPNLVTDPTKEFLGGCTAADLAQQKGYDGLAAFLAEKCLVAQFKDMQTAGNISGNLETIKAEKSSNPGNANEEEQSLKDTLAAYRTAAEAAARIQGAFREHELKVRSSAVRFASKEEEAKNIIAAMKIQHAFRNFEVRRKIAAAARIQYRFQTWKMRREFLNMRKKAIRIQAAFRGFQVRRQYQKITWSVGVLEKAILRWRLKRKGFRGLQVSQPDEKEGSEAVEDFYKTSQKQAEERLERSVVKVQAMFRSKKAQQDYRRMKLAHEEAQLEYDGMQELDQMATEES.

The segment at residues 25–151 is a DNA-binding region (CG-1); the sequence is IQTMLDEAYS…YRETHEVHAA (127 aa). Residues 272-372 are transcription activation; that stretch reads VYQNNNSCGA…HSHSDIPEQV (101 aa). An ANK repeat occupies 611–640; that stretch reads QGWTALHWAAYYGREKMVAALLSAGARPNL. 3 consecutive IQ domains span residues 757-786, 799-828, and 875-904; these read NIIA…IQYR, MRKK…SVGV, and LERS…AHEE. The interval 824–846 is calmodulin-binding; it reads WSVGVLEKAILRWRLKRKGFRGL. Residues 887 to 914 adopt a coiled-coil conformation; sequence RSKKAQQDYRRMKLAHEEAQLEYDGMQE.

Belongs to the CAMTA family. In terms of tissue distribution, expressed in roots, stems, leaves, pollen, top of sepals and siliques.

It is found in the nucleus. Its function is as follows. Transcription activator. Binds to the DNA consensus sequence 5'-[ACG]CGCG[GTC]-3'. Regulates transcriptional activity in response to calcium signals. Binds calmodulin in a calcium-dependent manner. Involved in response to cold. Contributes together with CAMTA3 to the positive regulation of the cold-induced expression of DREB1A/CBF3, DREB1B/CBF1 and DREB1C/CBF2. The protein is Calmodulin-binding transcription activator 5 of Arabidopsis thaliana (Mouse-ear cress).